The sequence spans 500 residues: NADH-quinone oxidoreductase subunit N (500 aa).

14 consecutive transmembrane segments (helical) span residues 13-33 (VMMP…IDLF), 42-62 (LLGL…LSLW), 79-99 (FAKS…LLSI), 111-131 (GEFY…ASSG), 133-153 (LITL…LVAI), 168-188 (VITG…IFGF), 211-231 (YVLS…LASA), 245-265 (TTPV…VIVL), 281-301 (ASML…TMII), 321-341 (VAHA…MFEA), 342-362 (IWFY…ILQV), 386-406 (AIAM…AGFI), 424-444 (VLAS…FGIF), and 461-481 (PPGV…LGVF).

The protein belongs to the complex I subunit 2 family. NDH-1 is composed of 14 different subunits. Subunits NuoA, H, J, K, L, M, N constitute the membrane sector of the complex.

The protein localises to the cell membrane. It carries out the reaction a quinone + NADH + 5 H(+)(in) = a quinol + NAD(+) + 4 H(+)(out). In terms of biological role, NDH-1 shuttles electrons from NADH, via FMN and iron-sulfur (Fe-S) centers, to quinones in the respiratory chain. The immediate electron acceptor for the enzyme in this species is believed to be a menaquinone. Couples the redox reaction to proton translocation (for every two electrons transferred, four hydrogen ions are translocated across the cytoplasmic membrane), and thus conserves the redox energy in a proton gradient. This is NADH-quinone oxidoreductase subunit N from Anoxybacillus flavithermus (strain DSM 21510 / WK1).